The chain runs to 165 residues: Cytochrome c-type biogenesis protein CcmE (165 aa).

At 1–7 (MTRKQKR) the chain is on the cytoplasmic side. Residues 8–28 (LAIIGGGMSFIVAAVLLVMFA) form a helical; Signal-anchor for type II membrane protein membrane-spanning segment. The Periplasmic portion of the chain corresponds to 29–165 (FGQSIAYFYM…ASGDKTGATK (137 aa)). Histidine 123 and tyrosine 127 together coordinate heme. The interval 138–165 (DKGLWQQGAEGAAPAASAASGDKTGATK) is disordered. Residues 145 to 158 (GAEGAAPAASAASG) are compositionally biased toward low complexity.

It belongs to the CcmE/CycJ family.

The protein resides in the cell inner membrane. Heme chaperone required for the biogenesis of c-type cytochromes. Transiently binds heme delivered by CcmC and transfers the heme to apo-cytochromes in a process facilitated by CcmF and CcmH. The chain is Cytochrome c-type biogenesis protein CcmE from Agrobacterium fabrum (strain C58 / ATCC 33970) (Agrobacterium tumefaciens (strain C58)).